The sequence spans 588 residues: Synaptotagmin-3 (588 aa).

The Vesicular segment spans residues 1–54 (MSGDYEDDLCRRALILVSDLCARIRDADTNDRCQEFNELRIRGYPRGPDADISV). A cysteine motif region spans residues 10 to 34 (CRRALILVSDLCARIRDADTNDRCQ). Residues 55-75 (SLLSVIVTFCGIVLLGVSLFV) traverse the membrane as a helical segment. Topologically, residues 76-588 (SWKLCWVPWR…KGLSEKENSE (513 aa)) are cytoplasmic. Disordered stretches follow at residues 129–161 (GGPHHHAHPAHHPPFAELLEPGGLGGSEPPEPS), 183–222 (PSQTSPELPSEGGTGSGLLLLPPSGGGLPSAQSHQQVTSL), and 238–257 (QTLTTQADPSSEERPPALPL). Positions 183–205 (PSQTSPELPSEGGTGSGLLLLPP) are enriched in low complexity. Over residues 213-222 (AQSHQQVTSL) the composition is skewed to polar residues. R286 is subject to Omega-N-methylarginine. 2 consecutive C2 domains span residues 297–418 (PCGR…PLWR) and 429–563 (DLGE…EHWH). Residues D328, D334, D386, F387, D388, S391, D394, D460, D466, D520, and D522 each coordinate Ca(2+).

This sequence belongs to the synaptotagmin family. Homodimer; disulfide-linked via the cysteine motif. Can also form heterodimers with SYT6, SYT9 and SYT10. The cofactor is Ca(2+). As to expression, brain, various endocrine tissues and hormone-secreting clonal cells.

Its subcellular location is the cell membrane. It localises to the cytoplasmic vesicle. The protein resides in the secretory vesicle membrane. Functionally, ca(2+) sensor involved in Ca(2+)-dependent exocytosis of secretory vesicles through Ca(2+) and phospholipid binding to the C2 domain. Ca(2+) induces binding of the C2-domains to phospholipid membranes and to assembled SNARE-complexes; both actions contribute to triggering exocytosis. Plays a role in dendrite formation by melanocytes. This is Synaptotagmin-3 (Syt3) from Rattus norvegicus (Rat).